Consider the following 239-residue polypeptide: Small ribosomal subunit protein uS2 (239 aa).

Belongs to the universal ribosomal protein uS2 family.

The sequence is that of Small ribosomal subunit protein uS2 from Synechococcus sp. (strain CC9902).